A 452-amino-acid polypeptide reads, in one-letter code: Pup--protein ligase (452 aa).

Residue Glu9 coordinates Mg(2+). Position 53 (Arg53) interacts with ATP. Mg(2+) is bound at residue Tyr55. The active-site Proton acceptor is the Asp57. Residue Glu63 coordinates Mg(2+). Residues Thr66 and Trp419 each contribute to the ATP site.

It belongs to the Pup ligase/Pup deamidase family. Pup-conjugating enzyme subfamily.

The enzyme catalyses ATP + [prokaryotic ubiquitin-like protein]-L-glutamate + [protein]-L-lysine = ADP + phosphate + N(6)-([prokaryotic ubiquitin-like protein]-gamma-L-glutamyl)-[protein]-L-lysine.. It participates in protein degradation; proteasomal Pup-dependent pathway. The protein operates within protein modification; protein pupylation. Catalyzes the covalent attachment of the prokaryotic ubiquitin-like protein modifier Pup to the proteasomal substrate proteins, thereby targeting them for proteasomal degradation. This tagging system is termed pupylation. The ligation reaction involves the side-chain carboxylate of the C-terminal glutamate of Pup and the side-chain amino group of a substrate lysine. This is Pup--protein ligase from Saccharomonospora viridis (strain ATCC 15386 / DSM 43017 / JCM 3036 / CCUG 5913 / NBRC 12207 / NCIMB 9602 / P101) (Thermoactinomyces viridis).